Here is a 390-residue protein sequence, read N- to C-terminus: Levoglucosan dehydrogenase (390 aa).

NADH contacts are provided by Phe-13, Met-14, Glu-43, Thr-81, Asn-83, His-86, Glu-103, Lys-104, Ala-130, and Asn-132. Residue Lys-104 coordinates levoglucosan. Residues Tyr-133 and Gln-163 each contribute to the levoglucosan site. Residues Trp-175 and Arg-176 each contribute to the NADH site. Levoglucosan contacts are provided by Arg-176, Asp-189, and His-193. Tyr-335 lines the NADH pocket.

This sequence belongs to the Gfo/Idh/MocA family. As to quaternary structure, homotetramer.

The catalysed reaction is levoglucosan + NAD(+) = 3-dehydrolevoglucosan + NADH + H(+). Functionally, catalyzes the oxidation of levoglucosan (1,6-anhydro-beta-D-glucose, LG) to 3-dehydrolevoglucosan (3-keto-LG). Exhibits high substrate specificity toward levoglucosan and NAD(+) for the oxidative reaction. Exhibits weak activities (about 4% compared with that of LG) toward L-sorbose and 1,5-anhydro-D-glucitol, and activity toward D-xylose is also detectable (1.7%). Can also efficiently catalyzes the NADH-dependent reduction (reverse reaction) of 3-keto-LG. The chain is Levoglucosan dehydrogenase from Pseudarthrobacter phenanthrenivorans (strain DSM 18606 / JCM 16027 / LMG 23796 / Sphe3) (Arthrobacter phenanthrenivorans).